A 226-amino-acid polypeptide reads, in one-letter code: MSNGSIPVDEVIEHLRNWNFTWNIILTILLVVLQYGHYKYSVFLYGVKMAILWILWPLVLALSLFDAWASFQVNWVFFAFSILMACITLMLWIMYFVNSIRLWRRTHSWWSFNPETDALLTTSVMGRQVCIPVLGAPTGVTLTLLSGTLFVEGYKVATGVQVSQLPNFVTVAKATTTIVYGRVGRSVNASSGTGWAFYVRSKHGDYSAVSNPSAVLTDSEKVLHLV.

Residues 1-11 (MSNGSIPVDEV) are Virion surface-facing. A helical transmembrane segment spans residues 12–32 (IEHLRNWNFTWNIILTILLVV). The Intravirion portion of the chain corresponds to 33 to 41 (LQYGHYKYS). Residues 42–62 (VFLYGVKMAILWILWPLVLAL) form a helical membrane-spanning segment. The Virion surface segment spans residues 63 to 75 (SLFDAWASFQVNW). Residues 76–96 (VFFAFSILMACITLMLWIMYF) form a helical membrane-spanning segment. The Intravirion segment spans residues 97–226 (VNSIRLWRRT…TDSEKVLHLV (130 aa)). The segment at 200 to 216 (RSKHGDYSAVSNPSAVL) is interaction with N protein.

Belongs to the alphacoronaviruses M protein family. Homomultimer. Interacts with envelope E protein in the budding compartment of the host cell, which is located between endoplasmic reticulum and the Golgi complex. Forms a complex with HE and S proteins. Interacts with nucleocapsid N protein. This interaction probably participates in RNA packaging into the virus.

The protein localises to the virion membrane. It localises to the host Golgi apparatus membrane. Its function is as follows. Component of the viral envelope that plays a central role in virus morphogenesis and assembly via its interactions with other viral proteins. The chain is Membrane protein from Sus scrofa (Pig).